Here is an 814-residue protein sequence, read N- to C-terminus: G-type lectin S-receptor-like serine/threonine-protein kinase At1g61400 (814 aa).

The signal sequence occupies residues 1–34 (MDFLFLLLERKNKHMGKKRVVLLWLSIFISFSSA). Positions 35-154 (EITEESPLSI…VSGRTLWESF (120 aa)) constitute a Bulb-type lectin domain. Topologically, residues 35-436 (EITEESPLSI…ELDVNKRKKT (402 aa)) are extracellular. 4 N-linked (GlcNAc...) asparagine glycosylation sites follow: N63, N104, N127, and N246. The EGF-like; atypical domain occupies 288–324 (PANSCDIYGVCGPFGFCVISVPPKCKCFKGFIPKSIE). Disulfide bonds link C292–C304 and C298–C312. N-linked (GlcNAc...) asparagine glycans are attached at residues N330, N346, and N385. In terms of domain architecture, PAN spans 343 to 425 (CQGNSTGKDA…GELLSIRLAR (83 aa)). 2 disulfides stabilise this stretch: C378-C399 and C382-C388. The helical transmembrane segment at 437–457 (IIAITVSLTLFVILGFTAFGF) threads the bilayer. Residues 458 to 814 (WRRRVEQNAL…EMTESVIHGR (357 aa)) are Cytoplasmic-facing. The Protein kinase domain maps to 500-785 (FSLSNKLGHG…DLPLPKQPTF (286 aa)). ATP is bound by residues 506-514 (LGHGGFGSV) and K528. 2 positions are modified to phosphoserine: S534 and S549. Positions 589–606 (KKRLEIDWPKRFDIIQGI) are caM-binding. The active-site Proton acceptor is the D625. S629 and S642 each carry phosphoserine. T659 is modified (phosphothreonine). A phosphoserine mark is found at S702 and S796.

This sequence belongs to the protein kinase superfamily. Ser/Thr protein kinase family.

The protein resides in the cell membrane. It catalyses the reaction L-seryl-[protein] + ATP = O-phospho-L-seryl-[protein] + ADP + H(+). The enzyme catalyses L-threonyl-[protein] + ATP = O-phospho-L-threonyl-[protein] + ADP + H(+). In Arabidopsis thaliana (Mouse-ear cress), this protein is G-type lectin S-receptor-like serine/threonine-protein kinase At1g61400.